Here is a 221-residue protein sequence, read N- to C-terminus: Zingipain-2 (221 aa).

2 cysteine pairs are disulfide-bonded: cysteine 24–cysteine 65 and cysteine 58–cysteine 98. Cysteine 27 is an active-site residue. 2 N-linked (GlcNAc...) asparagine glycosylation sites follow: asparagine 99 and asparagine 156. Residues cysteine 155 and cysteine 206 are joined by a disulfide bond. Residue histidine 161 is part of the active site.

It belongs to the peptidase C1 family.

The catalysed reaction is Preferential cleavage of peptides with a proline residue at the P2 position.. Functionally, cysteine proteinase with a specific activity toward peptides with a proline residue at the P2 position. The sequence is that of Zingipain-2 from Zingiber officinale (Ginger).